The sequence spans 958 residues: Importin-13 (958 aa).

20 HEAT repeats span residues 19-49 (ENVE…QAQV), 51-83 (PQAW…RSPA), 90-130 (PDQY…LSMM), 137-174 (AVAD…EFQT), 189-226 (LAQE…SWVQ), 231-263 (LMDC…NAIS), 271-320 (VNTL…ALLD), 325-367 (WQSF…DDIL), 370-433 (EPDK…YEML), 435-471 (AELL…FQSI), 482-517 (VVPG…WLAD), 519-553 (PVMI…CREC), 557-595 (LPPY…LLSA), 598-643 (VEEI…SNLF), 671-711 (PVVV…VKTL), 715-749 (FAPM…VHIF), 756-798 (FPPI…ALKR), 810-840 (VKAL…TELL), 855-888 (ENGK…FALN), and 892-926 (FSYL…QQIL). In terms of domain architecture, Importin N-terminal spans 40–106 (AQKWLMQAQV…KSQLFTHITR (67 aa)).

It belongs to the importin beta family.

The protein localises to the cytoplasm. It localises to the nucleus. Functionally, functions in nuclear protein import as nuclear transport receptor. Serves as receptor for nuclear localization signals (NLS) in cargo substrates. Is thought to mediate docking of the importin/substrate complex to the nuclear pore complex (NPC) through binding to nucleoporin and the complex is subsequently translocated through the pore by an energy requiring, Ran-dependent mechanism. At the nucleoplasmic side of the NPC, Ran binds to the importin, the importin/substrate complex dissociates and importin is re-exported from the nucleus to the cytoplasm where GTP hydrolysis releases Ran. The directionality of nuclear import is thought to be conferred by an asymmetric distribution of the GTP- and GDP-bound forms of Ran between the cytoplasm and nucleus. The polypeptide is Importin-13 (IPO13) (Gallus gallus (Chicken)).